The chain runs to 40 residues: Fibrinolytic protease (40 aa).

Residues 1–40 (IVGGNEVTPHAYPWQVGLFIDDMYFCGGSISVTLTGWGKP) enclose the Peptidase S1 domain.

The protein belongs to the peptidase S1 family.

The protein resides in the secreted. It is found in the extracellular space. Functionally, serine protease with fibrinolytic activity. This Euphausia superba (Antarctic krill) protein is Fibrinolytic protease.